The following is a 243-amino-acid chain: MEVSTSSMSSKPEQMQNPPPMISSPRFQPQIISPHHHDQHQHLSNPYPTTFVQADTSTFKQVVQMLTGSSTDTTTGKHHEAPSPVNNNNKGSSFSIPPIKKTNSFKLYERRQNNNNMFAKNDLMINTLRLQNSQRLMFTGGNSSHHQSPRFSPRNSSSSENILLSPSMLDFPKLGLNSPVTPLRSNDDPFNKSSPLSLGNSSEEDKAIADKGFYLHPSPVSTPRDSQPLLLPLFPVASPARNS.

Positions 1–16 (MEVSTSSMSSKPEQMQ) are enriched in polar residues. The tract at residues 1 to 49 (MEVSTSSMSSKPEQMQNPPPMISSPRFQPQIISPHHHDQHQHLSNPYPT) is disordered. Positions 59-68 (FKQVVQMLTG) match the VQ motif. Disordered regions lie at residues 69–98 (SSTD…SIPP) and 138–162 (FTGG…SENI). Phosphoserine is present on residues S83 and S95. The span at 84–98 (PVNNNNKGSSFSIPP) shows a compositional bias: polar residues. The residue at position 139 (T139) is a Phosphothreonine. S148, S152, S165, S167, and S178 each carry phosphoserine. The span at 149-162 (PRFSPRNSSSSENI) shows a compositional bias: low complexity. The tract at residues 180 to 243 (VTPLRSNDDP…FPVASPARNS (64 aa)) is disordered. T181 bears the Phosphothreonine mark. The span at 191–201 (NKSSPLSLGNS) shows a compositional bias: polar residues. 2 positions are modified to phosphoserine: S218 and S221. T222 carries the phosphothreonine modification. Residue S238 is modified to Phosphoserine.

Post-translationally, phosphorylated on serine and threonine residues by MPK6.

Its subcellular location is the nucleus. Its function is as follows. May modulate WRKY transcription factor activities. The chain is VQ motif-containing protein 33 from Arabidopsis thaliana (Mouse-ear cress).